The chain runs to 730 residues: Acetylene hydratase (730 aa).

2 residues coordinate [4Fe-4S] cluster: Cys9 and Cys12. Residue Asp13 is part of the active site. Residues Cys16 and Cys46 each coordinate [4Fe-4S] cluster. W-bis(molybdopterin guanine dinucleotide) contacts are provided by residues Lys48, 111-114, Cys141, 172-173, 177-179, 199-202, 218-221, Ser296, Gln300, 416-418, 422-423, 442-444, Asp460, Arg465, 602-613, Arg606, His676, Asp699, and Arg720; these read TEIN, KN, HNW, LDPR, YGTD, ASN, GY, YDQ, and FAGLREDSNFQS.

The protein belongs to the prokaryotic molybdopterin-containing oxidoreductase family. In terms of assembly, monomer. The cofactor is [4Fe-4S] cluster. It depends on W-bis(molybdopterin guanine dinucleotide) as a cofactor.

It carries out the reaction acetaldehyde = acetylene + H2O. Its function is as follows. Catalyzes the hydration of acetylene to form acetaldehyde. Ethylene cannot act as a substrate. The sequence is that of Acetylene hydratase from Syntrophotalea acetylenica (Pelobacter acetylenicus).